The chain runs to 660 residues: Threonine--tRNA ligase (660 aa).

In terms of domain architecture, TGS spans 1-49 (MPINEIRVQKGQRYRDAINDKKVIAVKKGDKFLDLDEIAGEDEAVQPVY). The catalytic stretch occupies residues 225-554 (DHRKIIAEMD…LLEHFAGKLP (330 aa)). Positions 318, 369, and 531 each coordinate Zn(2+).

This sequence belongs to the class-II aminoacyl-tRNA synthetase family. In terms of assembly, homodimer. Requires Zn(2+) as cofactor.

The protein localises to the cytoplasm. It carries out the reaction tRNA(Thr) + L-threonine + ATP = L-threonyl-tRNA(Thr) + AMP + diphosphate + H(+). In terms of biological role, catalyzes the attachment of threonine to tRNA(Thr) in a two-step reaction: L-threonine is first activated by ATP to form Thr-AMP and then transferred to the acceptor end of tRNA(Thr). This Thermoplasma volcanium (strain ATCC 51530 / DSM 4299 / JCM 9571 / NBRC 15438 / GSS1) protein is Threonine--tRNA ligase.